We begin with the raw amino-acid sequence, 279 residues long: Thymidylate synthase (279 aa).

Residue arginine 133 to arginine 134 participates in dUMP binding. Catalysis depends on cysteine 154, which acts as the Nucleophile. DUMP-binding positions include arginine 178–aspartate 181, asparagine 189, and histidine 219–tyrosine 221. (6R)-5,10-methylene-5,6,7,8-tetrahydrofolate is bound at residue aspartate 181. A (6R)-5,10-methylene-5,6,7,8-tetrahydrofolate-binding site is contributed by alanine 278.

This sequence belongs to the thymidylate synthase family. Bacterial-type ThyA subfamily. As to quaternary structure, homodimer.

The protein resides in the cytoplasm. The catalysed reaction is dUMP + (6R)-5,10-methylene-5,6,7,8-tetrahydrofolate = 7,8-dihydrofolate + dTMP. Its pathway is pyrimidine metabolism; dTTP biosynthesis. Functionally, catalyzes the reductive methylation of 2'-deoxyuridine-5'-monophosphate (dUMP) to 2'-deoxythymidine-5'-monophosphate (dTMP) while utilizing 5,10-methylenetetrahydrofolate (mTHF) as the methyl donor and reductant in the reaction, yielding dihydrofolate (DHF) as a by-product. This enzymatic reaction provides an intracellular de novo source of dTMP, an essential precursor for DNA biosynthesis. The protein is Thymidylate synthase of Streptococcus gordonii (strain Challis / ATCC 35105 / BCRC 15272 / CH1 / DL1 / V288).